The sequence spans 1230 residues: ATP-dependent helicase/nuclease subunit A (1230 aa).

The region spanning 9–480 (STWTDDQWKA…IDLNKNFRSR (472 aa)) is the UvrD-like helicase ATP-binding domain. An ATP-binding site is contributed by 30-37 (AAAGSGKT). Positions 507–796 (QAELKLGASY…RLMTIHSSKG (290 aa)) constitute a UvrD-like helicase C-terminal domain.

Belongs to the helicase family. AddA subfamily. Heterodimer of AddA and AddB/RexB. Mg(2+) serves as cofactor.

It catalyses the reaction Couples ATP hydrolysis with the unwinding of duplex DNA by translocating in the 3'-5' direction.. The catalysed reaction is ATP + H2O = ADP + phosphate + H(+). In terms of biological role, the heterodimer acts as both an ATP-dependent DNA helicase and an ATP-dependent, dual-direction single-stranded exonuclease. Recognizes the chi site generating a DNA molecule suitable for the initiation of homologous recombination. The AddA nuclease domain is required for chi fragment generation; this subunit has the helicase and 3' -&gt; 5' nuclease activities. The protein is ATP-dependent helicase/nuclease subunit A of Bacillus licheniformis (strain ATCC 14580 / DSM 13 / JCM 2505 / CCUG 7422 / NBRC 12200 / NCIMB 9375 / NCTC 10341 / NRRL NRS-1264 / Gibson 46).